The chain runs to 362 residues: Prostaglandin E2 receptor EP2 subtype (362 aa).

The Extracellular portion of the chain corresponds to 1-24; that stretch reads MDNFLNDSKLMEDCKSRQWLLSGE. N6 is a glycosylation site (N-linked (GlcNAc...) asparagine). The chain crosses the membrane as a helical span at residues 25-48; the sequence is SPAISSVMFSAGVLGNLIALALLA. At 49–66 the chain is on the cytoplasmic side; the sequence is RRWRGDTGCSAGSRTSIS. The helical transmembrane segment at 67–92 threads the bilayer; it reads LFHVLVTELVLTDLLGTCLISPVVLA. Residues 93–112 lie on the Extracellular side of the membrane; the sequence is SYSRNQTLVALAPESHACTY. A disulfide bridge connects residues C110 and C188. The helical transmembrane segment at 113–133 threads the bilayer; that stretch reads FAFTMTFFSLATMLMLFAMAL. Topologically, residues 134–152 are cytoplasmic; that stretch reads ERYLSIGYPYFYRRHLSRR. A helical transmembrane segment spans residues 153–177; the sequence is GGLAVLPVIYGASLLFCSLPLLNYG. Residues 178-199 are Extracellular-facing; it reads EYVQYCPGTWCFIRHGRTAYLQ. A helical membrane pass occupies residues 200–224; the sequence is LYATMLLLLIVAVLACNISVILNLI. Residues 225–262 are Cytoplasmic-facing; it reads RMHRRSRRSRCGLSGSSLRGPGSRRRGERTSMAEETDH. The segment at 234–255 is disordered; it reads RCGLSGSSLRGPGSRRRGERTS. Positions 235–245 are enriched in low complexity; the sequence is CGLSGSSLRGP. Residues 263 to 286 traverse the membrane as a helical segment; it reads LILLAIMTITFAICSLPFTIFAYM. Residues 287–299 lie on the Extracellular side of the membrane; it reads DETSSLKEKWDLR. A helical transmembrane segment spans residues 300–323; sequence ALRFLSVNSIIDPWVFAILRPPVL. Topologically, residues 324–362 are cytoplasmic; it reads RLMRSVLCCRTSLRTQEAQQTSCSTQSSASKQTDLCGQL.

The protein belongs to the G-protein coupled receptor 1 family.

Its subcellular location is the cell membrane. Its function is as follows. Receptor for prostaglandin E2 (PGE2). The activity of this receptor is mediated by G(s) proteins that stimulate adenylate cyclase. The subsequent raise in intracellular cAMP is responsible for the relaxing effect of this receptor on smooth muscle. The sequence is that of Prostaglandin E2 receptor EP2 subtype (Ptger2) from Mus musculus (Mouse).